A 199-amino-acid chain; its full sequence is MSRYTGPRHKLARRLGISLDGTGKDIKRNFPPGQHGHNNRRKLSEYGIQLQEKQKLRHMFGLNEKQFRRTFDNASKMAGVVGENFMKLLESRLDNLVYRMGFAPTRPAARQLVNHGHFLVNGKKVNIPSYRVQPGDVISIREKSRGLQLIKDALEGRTFLPNYVTFNDAAAEGTFTRLPDREEMPAEINEVLIVEFYSR.

The S4 RNA-binding domain maps to 91–154 (SRLDNLVYRM…RGLQLIKDAL (64 aa)).

This sequence belongs to the universal ribosomal protein uS4 family. In terms of assembly, part of the 30S ribosomal subunit. Contacts protein S5. The interaction surface between S4 and S5 is involved in control of translational fidelity.

One of the primary rRNA binding proteins, it binds directly to 16S rRNA where it nucleates assembly of the body of the 30S subunit. Its function is as follows. With S5 and S12 plays an important role in translational accuracy. This chain is Small ribosomal subunit protein uS4, found in Brevibacillus brevis (strain 47 / JCM 6285 / NBRC 100599).